The primary structure comprises 431 residues: Peptidase B (431 aa).

Residues Lys196 and Asp201 each contribute to the Mn(2+) site. Lys208 is a catalytic residue. 3 residues coordinate Mn(2+): Asp219, Asp278, and Glu280. The active site involves Arg282.

It belongs to the peptidase M17 family. As to quaternary structure, homohexamer. Requires Mn(2+) as cofactor.

The protein localises to the cytoplasm. It carries out the reaction Release of an N-terminal amino acid, Xaa, from a peptide or arylamide. Xaa is preferably Glu or Asp but may be other amino acids, including Leu, Met, His, Cys and Gln.. In terms of biological role, probably plays an important role in intracellular peptide degradation. In Photorhabdus laumondii subsp. laumondii (strain DSM 15139 / CIP 105565 / TT01) (Photorhabdus luminescens subsp. laumondii), this protein is Peptidase B.